The primary structure comprises 346 residues: Sensor histidine kinase GraS (346 aa).

A run of 2 helical transmembrane segments spans residues 15 to 35 (INWILWILFLNIILLGVAYID) and 43 to 63 (VFYIVILNVGLSILFLLFTFV). In terms of domain architecture, Histidine kinase spans 126–332 (EFVHDIKTPV…TFYFIFPQQN (207 aa)). A Phosphohistidine; by autocatalysis modification is found at histidine 129.

In terms of processing, autophosphorylated.

Its subcellular location is the cell membrane. The enzyme catalyses ATP + protein L-histidine = ADP + protein N-phospho-L-histidine.. Functionally, member of the two-component regulatory system GraR/GraS involved in resistance against cationic antimicrobial peptides (CAMPs). GraS probably functions as a sensor protein kinase which is autophosphorylated at a histidine residue and transfers its phosphate group to GraR. The protein is Sensor histidine kinase GraS (graS) of Staphylococcus epidermidis (strain ATCC 35984 / DSM 28319 / BCRC 17069 / CCUG 31568 / BM 3577 / RP62A).